We begin with the raw amino-acid sequence, 510 residues long: MPLLNWSRHMVCLTAAGLITVPTVYATDTLTRDNGAVVGDNQNSQTAGAQGPVLLQDVQLLQKLQRFDRERIPERVVHARGTGVKGEFTASADISDLSKATVFKSGEKTPVFVRFSSVVHGNHSPETLRDPHGFATKFYTADGNWDLVGNNFPTFFIRDAIKFPDMVHAFKPDPRTNLDNDSRRFDFFSHVPEATRTLTLLYSNEGTPAGYRFMDGNGVHAYKLVNAKGEVHYVKFHWKSLQGIKNLDPKEVAQVQSKDYSHLTNDLVGAIKKGDFPKWDLYVQVLKPEELAKFDFDPLDATKIWPDVPEKKIGQMVLNKNVDNFFQETEQVAMAPANLVPGIEPSEDRLLQGRVFSYADTQMYRLGAIGLSLPVNQPKVAVNNGNQDGALNTGHTTSGVNYEPSRLEPRPADDKARYSELPLSGTTQQAKITREQNFKQAGDLFRSYSAKEKTDLVQRFGESLADTHTESKNIMLSVLYKEDRHYGTRVAEVAKGDLSKVKSLAASLKD.

A signal peptide spans Met1–Ala26. Residues His78 and Asn150 contribute to the active site. Tyr358 lines the heme pocket. A compositionally biased stretch (polar residues) spans Asn386–Val400. A disordered region spans residues Asn386–Ala412.

This sequence belongs to the catalase family. Heme serves as cofactor.

It is found in the periplasm. It carries out the reaction 2 H2O2 = O2 + 2 H2O. Decomposes hydrogen peroxide into water and oxygen; serves to protect cells from the toxic effects of hydrogen peroxide. This is Catalase (katB) from Pseudomonas syringae pv. syringae.